A 198-amino-acid chain; its full sequence is Ribonuclease HII (198 aa).

The RNase H type-2 domain maps to glycine 14 to leucine 198. 3 residues coordinate a divalent metal cation: aspartate 20, glutamate 21, and aspartate 112.

The protein belongs to the RNase HII family. Mn(2+) serves as cofactor. The cofactor is Mg(2+).

It localises to the cytoplasm. The enzyme catalyses Endonucleolytic cleavage to 5'-phosphomonoester.. Endonuclease that specifically degrades the RNA of RNA-DNA hybrids. In Wolbachia sp. subsp. Drosophila simulans (strain wRi), this protein is Ribonuclease HII.